Here is a 105-residue protein sequence, read N- to C-terminus: Thioredoxin (105 aa).

One can recognise a Thioredoxin domain in the interval 2 to 105 (VKQIESKTAF…KLEATINELV (104 aa)). Lys-3 carries the post-translational modification N6-acetyllysine. Lys-8 carries the N6-succinyllysine modification. Active-site nucleophile residues include Cys-32 and Cys-35. Cys-32 and Cys-35 are joined by a disulfide. The residue at position 39 (Lys-39) is an N6-acetyllysine. S-nitrosocysteine occurs at positions 62 and 69. An S-nitrosocysteine; alternate modification is found at Cys-73. Lys-94 carries the N6-acetyllysine; alternate modification. Lys-94 carries the post-translational modification N6-succinyllysine; alternate.

The protein belongs to the thioredoxin family. In terms of assembly, homodimer; disulfide-linked. Interacts with TXNIP through the redox-active site. Interacts with MAP3K5 and CASP3. In case of infection, interacts with S.typhimurium protein slrP. Interacts with APEX1; the interaction stimulates the FOS/JUN AP-1 DNA-binding activity in a redox-dependent manner. Post-translationally, in the fully reduced protein, both Cys-69 and Cys-73 are nitrosylated in response to nitric oxide (NO). When two disulfide bonds are present in the protein, only Cys-73 is nitrosylated. Cys-73 can serve as donor for nitrosylation of target proteins. In terms of processing, in case of infection, ubiquitinated by S.typhimurium protein slrP, leading to its degradation.

It localises to the nucleus. The protein resides in the cytoplasm. Its subcellular location is the secreted. Functionally, participates in various redox reactions through the reversible oxidation of its active center dithiol to a disulfide and catalyzes dithiol-disulfide exchange reactions. Plays a role in the reversible S-nitrosylation of cysteine residues in target proteins, and thereby contributes to the response to intracellular nitric oxide. Nitrosylates the active site Cys of CASP3 in response to nitric oxide (NO), and thereby inhibits caspase-3 activity. Induces the FOS/JUN AP-1 DNA-binding activity in ionizing radiation (IR) cells through its oxidation/reduction status and stimulates AP-1 transcriptional activity. In terms of biological role, ADF augments the expression of the interleukin-2 receptor TAC (IL2R/P55). The polypeptide is Thioredoxin (TXN) (Homo sapiens (Human)).